The sequence spans 189 residues: Large ribosomal subunit protein eL20 (189 aa).

It belongs to the eukaryotic ribosomal protein eL20 family.

It is found in the cytoplasm. This chain is Large ribosomal subunit protein eL20 (RPL18A), found in Tetrahymena thermophila.